The sequence spans 323 residues: MDRQGAVGQLRRTVEEFAGTYCDIDDQWCVALSGGSDSLALTAVAAQLRSTTAFIVDHGLQSDSAAVAETARKQAISLGCVDAQVLCVQIDPPFGPKGGLEAAARAARYAVLGANRNGPVLLAHTLDDQAETVLLGLGRGSGARSIAGMRPHDPPWCRPLLGVRRSVPRAACHELGLNAWQDPHNTDCRYTRTRLRLEVLPLLEDVLGGGVVEALARTATALREDTELIDTFAAQALPNICAGSGLHARALAALPDAVRRRVIRGWLLNGGATGLTDKQIRGVDTLVTAWRGQGGVAVGSTLRGQRLIASRYDGVLTLHCAPV.

33 to 38 (SGGSDS) is an ATP binding site.

It belongs to the tRNA(Ile)-lysidine synthase family.

The protein resides in the cytoplasm. The enzyme catalyses cytidine(34) in tRNA(Ile2) + L-lysine + ATP = lysidine(34) in tRNA(Ile2) + AMP + diphosphate + H(+). In terms of biological role, ligates lysine onto the cytidine present at position 34 of the AUA codon-specific tRNA(Ile) that contains the anticodon CAU, in an ATP-dependent manner. Cytidine is converted to lysidine, thus changing the amino acid specificity of the tRNA from methionine to isoleucine. This is tRNA(Ile)-lysidine synthase from Mycobacterium leprae (strain TN).